The following is a 365-amino-acid chain: MFEINPVKHKIEEVAERTQVLRGYLDYDAKKERLEEVNAELEQPDVWNEPEKAQALGKERSSLEAIVETIDQLEQGLEDVSGLLDLAVEADDEETFNEAVAELEGLNKKLEQLEFRRMFSGEYDSADCYLDLQAGSGGTEAQDWASMLMRMYLRWAESRGFKTEIIEESDGDVAGLKSATIKIIGEYAYGWLRTETGVHRLVRKSPFDSGGRRHTSFSSAFVYPEVDDNIDIEINPADLRIDVYRASGAGGQHVNKTESAVRITHVPTGLVTQCQNDRSQHKNKDQAMKQMKAKLYELEMQKKNADKQVMEDNKSDIGWGSQIRSYVLDDSRIKDLRTGVETRNTQAVLDGDLDKFIEASLKAGL.

The residue at position 252 (Gln252) is an N5-methylglutamine.

The protein belongs to the prokaryotic/mitochondrial release factor family. Post-translationally, methylated by PrmC. Methylation increases the termination efficiency of RF2.

It localises to the cytoplasm. Functionally, peptide chain release factor 2 directs the termination of translation in response to the peptide chain termination codons UGA and UAA. This is Peptide chain release factor 2 from Proteus mirabilis (strain HI4320).